The chain runs to 175 residues: Large ribosomal subunit protein uL10 (175 aa).

This sequence belongs to the universal ribosomal protein uL10 family. As to quaternary structure, part of the ribosomal stalk of the 50S ribosomal subunit. The N-terminus interacts with L11 and the large rRNA to form the base of the stalk. The C-terminus forms an elongated spine to which L12 dimers bind in a sequential fashion forming a multimeric L10(L12)X complex.

Forms part of the ribosomal stalk, playing a central role in the interaction of the ribosome with GTP-bound translation factors. The polypeptide is Large ribosomal subunit protein uL10 (Xylella fastidiosa (strain M12)).